Here is a 349-residue protein sequence, read N- to C-terminus: Hypoxia-inducible factor 1-alpha inhibitor (349 aa).

Residues 1 to 10 (MAATAAEAVA) show a composition bias toward low complexity. Positions 1–51 (MAATAAEAVASGSGEPREEAGALGPAWDESQLRSYSFPTRPIPRLSQSDPR) are disordered. At alanine 2 the chain carries N-acetylalanine. Positions 2–125 (AATAAEAVAS…PRSNREEMKF (124 aa)) are interaction with VHL. The JmjC domain maps to 142–312 (ERLYLQQTLN…PKRIEYPLKA (171 aa)). Residue tyrosine 145 participates in 2-oxoglutarate binding. Substrate is bound by residues aspartate 152 and 181-183 (QLT). Threonine 196 provides a ligand contact to 2-oxoglutarate. Fe cation-binding residues include histidine 199 and aspartate 201. 201-203 (DEQ) is a binding site for substrate. 2-oxoglutarate is bound by residues asparagine 205 and lysine 214. Position 238–239 (238–239 (RQ)) interacts with substrate. Histidine 279 is a Fe cation binding site. Asparagine 294 contacts 2-oxoglutarate. The substrate site is built by alanine 300 and asparagine 321.

As to quaternary structure, homodimer; homodimerization is essential for catalytic activity. Interacts with VHL and HIF1A. Part of a complex with VHL, HIF1A and HDAC1 or HDAC2 or HDAC3. Interacts with NFKB1 and NFKBIA. Interacts with NOTCH1, NOTCH2 and NOTCH3 but not with NOTCH4. Interacts with APBA3; binding inhibits HIF1AN binding to HIF1A. Interacts with TNKS2. Interacts with PPP1R12A. Interacts with ASB4. Interacts with UBE3A. Interacts with ANKS3. Interacts with NECAB3; the interaction is indirect and seems to be mediated by APBA3. Requires Fe(2+) as cofactor.

The protein resides in the nucleus. It localises to the cytoplasm. The protein localises to the perinuclear region. The enzyme catalyses L-asparaginyl-[hypoxia-inducible factor alpha subunit] + 2-oxoglutarate + O2 = (3S)-3-hydroxy-L-asparaginyl-[hypoxia-inducible factor alpha subunit] + succinate + CO2. It catalyses the reaction L-histidyl-[ankyrin-repeat domain protein] + 2-oxoglutarate + O2 = (3S)-3-hydroxy-L-histidyl-[ankyrin-repeat domain protein] + succinate + CO2. The catalysed reaction is L-asparaginyl-[ankyrin-repeat domain protein] + 2-oxoglutarate + O2 = (3S)-3-hydroxy-L-asparaginyl-[ankyrin-repeat domain protein] + succinate + CO2. It carries out the reaction L-aspartyl-[ankyrin-repeat domain protein] + 2-oxoglutarate + O2 = (3S)-3-hydroxy-L-aspartyl-[ankyrin-repeat domain protein] + succinate + CO2. Functionally, hydroxylates HIF-1 alpha at 'Asn-803' in the C-terminal transactivation domain (CAD). Functions as an oxygen sensor and, under normoxic conditions, the hydroxylation prevents interaction of HIF-1 with transcriptional coactivators including Cbp/p300-interacting transactivator. Involved in transcriptional repression through interaction with HIF1A, VHL and histone deacetylases. Hydroxylates specific Asn residues within ankyrin repeat domains (ARD) of NFKB1, NFKBIA, NOTCH1, ASB4, PPP1R12A and several other ARD-containing proteins. Also hydroxylates Asp and His residues within ARDs of ANK1 and TNKS2, respectively. Negatively regulates NOTCH1 activity, accelerating myogenic differentiation. Positively regulates ASB4 activity, promoting vascular differentiation. This is Hypoxia-inducible factor 1-alpha inhibitor (HIF1AN) from Homo sapiens (Human).